The following is a 525-amino-acid chain: Cytochrome P450 monooxygenase tpcC (525 aa).

A helical transmembrane segment spans residues 13-33; that stretch reads LPVTLVSLLVGSIFYFCYLTV. Cys457 provides a ligand contact to heme.

This sequence belongs to the cytochrome P450 family. The cofactor is heme.

Its subcellular location is the membrane. It participates in secondary metabolite biosynthesis; terpenoid biosynthesis. Functionally, cytochrome P450 monooxygenase; part of the gene cluster that mediates the biosynthesis of terpestacin. The bifunctional terpene synthase tpcA converts isopentenyl diphosphate (IPP) and dimethylallyl diphosphate (DMAPP) into the sesterterpene preterpestacin I. The C-terminal prenyltransferase (PT) domain of tpcA catalyzes formation of GFPP, whereas the N-terminal terpene cyclase (TC) domain catalyzes the cyclization of GFPP into preterpestacin I. The cytochrome P450 monooxygenase tpcB then hydroxylates preterpestacin I to yield 24-hydroxypreterpstacin I (renamed as preterpestacin II) whereas the cytochrome P450 monooxygenase tpcC further hydroxylates preterpestacin II to yield 16,17-dihydroxypreterpestacin II (renamed as preterpestacin III). Finally, the FAD-dependent monooxygenase tpcD converts preterpestacin III into terpestacin. The protein is Cytochrome P450 monooxygenase tpcC of Cochliobolus heterostrophus (strain C5 / ATCC 48332 / race O) (Southern corn leaf blight fungus).